The primary structure comprises 466 residues: Adenosylhomocysteinase (466 aa).

Substrate-binding residues include T57, D132, and E192. An NAD(+)-binding site is contributed by 193 to 195 (TTT). Positions 222 and 226 each coordinate substrate. NAD(+)-binding positions include N227, 256 to 261 (GYGDVG), E279, N314, 335 to 337 (IGH), and N380.

The protein belongs to the adenosylhomocysteinase family. NAD(+) is required as a cofactor.

It is found in the cytoplasm. It carries out the reaction S-adenosyl-L-homocysteine + H2O = L-homocysteine + adenosine. Its pathway is amino-acid biosynthesis; L-homocysteine biosynthesis; L-homocysteine from S-adenosyl-L-homocysteine: step 1/1. In terms of biological role, may play a key role in the regulation of the intracellular concentration of adenosylhomocysteine. This Rhizobium etli (strain ATCC 51251 / DSM 11541 / JCM 21823 / NBRC 15573 / CFN 42) protein is Adenosylhomocysteinase.